We begin with the raw amino-acid sequence, 1486 residues long: Homeobox protein cut-like 2 (1486 aa).

The segment at 114–167 is disordered; it reads DRLQPPSFDPSGQPRRDLHTSWKRNPELLSPKEQREGTSPAGPTLTEGSRLPGI. The span at 127-149 shows a compositional bias: basic and acidic residues; it reads PRRDLHTSWKRNPELLSPKEQRE. At Ser-143 the chain carries Phosphoserine. Positions 195-374 form a coiled coil; sequence TLAARLGEAE…IKTELSILKA (180 aa). Disordered regions lie at residues 415–481, 517–549, 661–690, 716–758, 800–858, and 964–1032; these read LLAS…LSPF, PTAPATPAPGPEPLGGPEPADGGGGGAAGPGAE, EIESQKGGEPKTSVAPLSIANGTTPASTSE, VAPR…AQAP, YASV…EGAT, and GQAV…SGSQ. Residues 419-428 show a composition bias toward acidic residues; that stretch reads PEEDPSEDDS. Residues 443–460 are compositionally biased toward pro residues; that stretch reads QQLPPPPGPEDPLSPSPG. A compositionally biased stretch (low complexity) spans 461–470; sequence QPLLGPSLGP. Pro residues predominate over residues 517-532; it reads PTAPATPAPGPEPLGG. Positions 544-631 form a DNA-binding region, CUT 1; that stretch reads AGPGAEEEQL…VLALRTIQVR (88 aa). The span at 680–690 shows a compositional bias: polar residues; that stretch reads ANGTTPASTSE. Residues 690-717 are a coiled coil; that stretch reads EDAIKSILEQARREMQAQQQALLEMEVA. The span at 802–816 shows a compositional bias: low complexity; that stretch reads SVSPSLSSSSSSGYS. Acidic residues predominate over residues 834-844; the sequence is PEDEAAAGAED. Over residues 845–854 the composition is skewed to basic and acidic residues; the sequence is EPPRTGELKA. The segment at residues 887 to 974 is a DNA-binding region (CUT 2); that stretch reads QYELYMYREV…QAVGQQPGAS (88 aa). Residues 967–976 show a composition bias toward polar residues; that stretch reads VGQQPGASQA. A compositionally biased stretch (low complexity) spans 1017–1031; that stretch reads GRSSSSLSGKMYSGS. The segment at residues 1038–1125 is a DNA-binding region (CUT 3); sequence QEIVAMSPEL…VEKLRDMKKL (88 aa). The homeobox DNA-binding region spans 1168–1227; sequence IKKPRVVLAPEEKEALRKAYQLEPYPSQQTIELLSFQLNLKTNTVINWFHNYRSRMRREM. The segment at 1231–1453 is disordered; sequence GTQDEPDLDP…ALHPSAKVNP (223 aa). Over residues 1266–1276 the composition is skewed to basic and acidic residues; sequence EDQKPTVKELE. A compositionally biased stretch (polar residues) spans 1283 to 1293; the sequence is ENSTPLTTQDK. The segment covering 1320-1334 has biased composition (basic and acidic residues); it reads ELDKGQGPPKEEHPD. Polar residues predominate over residues 1381–1401; the sequence is KSASESSRCSLEVSLNSPSAA. The segment covering 1402–1420 has biased composition (low complexity); the sequence is SSPGLMMSVSPVPSSSAPI. A compositionally biased stretch (pro residues) spans 1421 to 1431; sequence SPSPPGAPPAK.

The protein belongs to the CUT homeobox family.

The protein localises to the nucleus. Its function is as follows. Transcription factor involved in the control of neuronal proliferation and differentiation in the brain. Regulates dendrite development and branching, dendritic spine formation, and synaptogenesis in cortical layers II-III. Binds to DNA in a sequence-specific manner. The protein is Homeobox protein cut-like 2 (CUX2) of Homo sapiens (Human).